The sequence spans 370 residues: Polyadenylate-binding protein 4-like (370 aa).

RRM domains lie at 10 to 88, 98 to 174, 190 to 267, and 293 to 369; these read ASLY…WSQR, GNVF…RFKN, TNVY…RAQK, and VKLY…LAQR.

Belongs to the polyadenylate-binding protein type-1 family.

Functionally, may bind RNA. The sequence is that of Polyadenylate-binding protein 4-like (PABPC4L) from Homo sapiens (Human).